The sequence spans 94 residues: PqqA binding protein (94 aa).

This sequence belongs to the PqqD family. As to quaternary structure, monomer. Interacts with PqqE.

It participates in cofactor biosynthesis; pyrroloquinoline quinone biosynthesis. Functionally, functions as a PqqA binding protein and presents PqqA to PqqE, in the pyrroloquinoline quinone (PQQ) biosynthetic pathway. This Pseudomonas syringae pv. syringae (strain B728a) protein is PqqA binding protein.